The sequence spans 1017 residues: Probable disease resistance protein RDL5 (1017 aa).

Residues 25-52 (QGVEDQVTELKRDLNMLSSFLKDANAKK) adopt a coiled-coil conformation. The 314-residue stretch at 147 to 460 (KQREMRQKFS…AEGIFQPRHY (314 aa)) folds into the NB-ARC domain. Position 190–197 (190–197 (GMGGLGKT)) interacts with ATP. LRR repeat units follow at residues 602–627 (LIHLRYLSLEYAEVTHIPYSLGNLKL), 649–674 (MQELRYLALPSDMGRKTKLELSNLVK), 675–699 (LETLENFSTENSSLEDLCGMVRLST), 768–791 (PSHLTTLYLESCRLEEDPMPILEK), 792–819 (LLQLKELELGFESFSGKKMVCSSGGFPQ), 841–865 (MPLLRTLDIQVCRKLKQLPDEHLPS), and 937–962 (MPFLHTLYIDDCPKLKKLPDGLQFIY).

Belongs to the disease resistance NB-LRR family.

In terms of biological role, potential disease resistance protein. The polypeptide is Probable disease resistance protein RDL5 (RDL5) (Arabidopsis thaliana (Mouse-ear cress)).